The chain runs to 357 residues: Aspartate-semialdehyde dehydrogenase (357 aa).

Positions 12, 13, 14, 15, 37, 40, 84, and 85 each coordinate NADP(+). The Acyl-thioester intermediate role is filled by cysteine 151. Glycine 183 lines the NADP(+) pocket. Catalysis depends on histidine 247, which acts as the Proton acceptor. Position 323 is a phosphoserine (serine 323). Asparagine 335 contacts NADP(+).

Belongs to the aspartate-semialdehyde dehydrogenase family.

It is found in the cytoplasm. It localises to the cytosol. The protein resides in the nucleus. The catalysed reaction is L-aspartate 4-semialdehyde + phosphate + NADP(+) = 4-phospho-L-aspartate + NADPH + H(+). Its pathway is amino-acid biosynthesis; L-methionine biosynthesis via de novo pathway; L-homoserine from L-aspartate: step 2/3. It participates in amino-acid biosynthesis; L-threonine biosynthesis; L-threonine from L-aspartate: step 2/5. Its function is as follows. Catalyzes the NADPH-dependent formation of L-aspartate 4-semialdehyde (L-ASA) by the reductive dephosphorylation of 4-phospho-L-aspartate. Mediates the second step in the biosynthesis of amino acids that derive from aspartate (the aspartate family of amino acids), including methioinine and threonine, the latter of which is a precursor to isoleucine. This is Aspartate-semialdehyde dehydrogenase from Schizosaccharomyces pombe (strain 972 / ATCC 24843) (Fission yeast).